We begin with the raw amino-acid sequence, 51 residues long: Putative protein LomR (51 aa).

The protein belongs to the outer membrane OOP (TC 1.B.6) superfamily. Ail family.

The polypeptide is Putative protein LomR (lomR) (Escherichia coli (strain K12)).